A 750-amino-acid chain; its full sequence is Coiled-coil domain-containing protein 142 (750 aa).

A disordered region spans residues M1–E29. Residues A87–D110 are a coiled coil. Residues L687–P714 form a disordered region. Residues P693 to L707 show a composition bias toward polar residues.

In Homo sapiens (Human), this protein is Coiled-coil domain-containing protein 142 (CCDC142).